The primary structure comprises 546 residues: Immunoglobulin heavy constant epsilon (546 aa).

Topologically, residues 1 to 499 are extracellular; that stretch reads ASTQSPSVFP…EAPWTWTGLC (499 aa). Ig-like domains lie at 6-103, 112-210, 214-318, and 324-423; these read PSVF…KTFS, PTVK…KKCA, PRGV…TKTS, and PEVY…RAVS. Cystine bridges form between cysteine 15-cysteine 105, cysteine 29-cysteine 85, cysteine 135-cysteine 193, cysteine 239-cysteine 299, and cysteine 345-cysteine 405. N-linked (GlcNAc...) asparagine glycans are attached at residues asparagine 21, asparagine 49, asparagine 99, asparagine 146, asparagine 252, asparagine 264, and asparagine 275. A helical membrane pass occupies residues 500–520; sequence IFAALFLLSVSYSAAITLLMV. Over 521–546 the chain is Cytoplasmic; it reads QRFLSATRQGRPQTSLDYTNVLQPHA.

In terms of assembly, the basic structural unit of both sIgE and mIgE molecules consists of two identical heavy chains and two identical light chains; disulfide-linked. N-terminal variable regions of the heavy and light chains form the antigen binding sites, whereas the C-terminal constant regions of the heavy chains interact with immune receptors to mediate effector functions. As to quaternary structure, part of IgE antibody. Interacts (via CH3) with the alpha chain/FCE1RA of IgE Fc receptor complex. Interacts (via CH3 region) with FCER2 (via C-type lectin domain); this interaction regulates IgE homeostasis. Part of IgE B cell antigen receptor complex (BCR). The BCR complex consists of one mIgE molecule responsible for antigen binding, non-covalently associated with CD79A and CD79B signaling chains. As to expression, expressed in B lymphocytes stimulated with IL4 and CD40.

Its subcellular location is the secreted. The protein localises to the cell membrane. Constant region of immunoglobulin heavy chains. Immunoglobulins, also known as antibodies, are membrane-bound or secreted glycoproteins produced by B lymphocytes. In the recognition phase of humoral immunity, the membrane-bound immunoglobulins serve as receptors which, upon binding of a specific antigen, trigger the clonal expansion and differentiation of B lymphocytes into immunoglobulins-secreting plasma cells. Secreted immunoglobulins mediate the effector phase of humoral immunity, which results in the elimination of bound antigens. The antigen binding site is formed by the variable domain of one heavy chain, together with that of its associated light chain. Thus, each immunoglobulin has two antigen binding sites with remarkable affinity for a particular antigen. The variable domains are assembled by a process called V-(D)-J rearrangement and can then be subjected to somatic hypermutations which, after exposure to antigen and selection, allow affinity maturation for a particular antigen. Functionally, constant region of secreted IgE, also known as the Fc region of IgE antibody. Mediates IgE effector functions on myeloid and lymphoid cells primarily via two Fc receptors, the high-affinity IgE Fc receptor complex/FCER1A:MS4A2:FCGR1A and the low-affinity FCER2 receptor, which upon antigen/allergen cross-linking initiate signaling pathways that lead to immune cell activation and differentiation. Triggers the immediate hypersensitivity response to allergens as a host defense mechanism against helminth parasites, pathogenic bacteria and venom toxicity. When dysregulated, it can elicit harmful life-threatening allergic and anaphylactic reactions. Stimulates the high-affinity IgE Fc receptor complex/FCER1A:MS4A2:FCGR1A on mast cells, basophils and eosinophils leading to secretion of vasoactive amines, lipid mediators and cytokines that contribute to inflammatory response, tissue remodeling and cytotoxicity against microbes. On macrophages, cross-linking of FCER2 by IgE immune complexes induces intracellular killing of parasites through activation of L-Arginine-nitric oxide pathway. Activates macrophages to kill tumor cells via antigen-specific antibody-dependent cytotoxicity (ADCC). Triggers differentiation of quiescent M0 macrophages toward M1 state and reprograms M2 macrophages toward a proinflammatory state with antitumor functions. Stimulates FCER2 on B cells and initiates IgE-dependent antigen uptake and presentation to T cells. In terms of biological role, constant region of membrane-bound IgE (long mIgE), part of the B cell receptor complex (BCR). Upon antigen cross-linking triggers quick BCR signaling, ensuring survival of IgE-switched B cells and differentiation into plasma cells, thus regulating both primary and memory IgE responses. Its function is as follows. Constant region of membrane-bound IgE (short mIgE), part of the B cell receptor complex (BCR). Upon antigen cross-linking initiates slower but sustained BCR signaling that negatively regulates mature B cell proliferation. In Homo sapiens (Human), this protein is Immunoglobulin heavy constant epsilon.